Here is a 376-residue protein sequence, read N- to C-terminus: Putative glutamate--cysteine ligase 2-1 (376 aa).

Belongs to the glutamate--cysteine ligase type 2 family. YbdK subfamily.

It catalyses the reaction L-cysteine + L-glutamate + ATP = gamma-L-glutamyl-L-cysteine + ADP + phosphate + H(+). Functionally, ATP-dependent carboxylate-amine ligase which exhibits weak glutamate--cysteine ligase activity. The protein is Putative glutamate--cysteine ligase 2-1 of Mycobacterium sp. (strain KMS).